Consider the following 468-residue polypeptide: Glutamine synthetase (468 aa).

One can recognise a GS beta-grasp domain in the interval 11 to 96 (HDVKWIDLRF…LVCDIIEPST (86 aa)). A GS catalytic domain is found at 104–468 (PRAIAHRAEE…PLEYELYYSC (365 aa)). Glutamate 129 and glutamate 131 together coordinate Mg(2+). Glutamate 207 provides a ligand contact to ATP. Glutamate 212 and glutamate 220 together coordinate Mg(2+). Residues 264–265 (NG) and glycine 265 contribute to the L-glutamate site. Histidine 269 is a Mg(2+) binding site. ATP is bound by residues 271–273 (HMS) and serine 273. Arginine 321, glutamate 327, and arginine 339 together coordinate L-glutamate. ATP contacts are provided by arginine 339, arginine 344, and arginine 352. Glutamate 357 contributes to the Mg(2+) binding site. Residue arginine 359 participates in L-glutamate binding. Position 397 is an O-AMP-tyrosine (tyrosine 397).

Belongs to the glutamine synthetase family. In terms of assembly, oligomer of 12 subunits arranged in the form of two hexagons. It depends on Mg(2+) as a cofactor. Mn(2+) serves as cofactor.

It catalyses the reaction L-glutamate + NH4(+) + ATP = L-glutamine + ADP + phosphate + H(+). Its activity is regulated as follows. When cellular nitrogen levels are high, the C-terminal adenylyl transferase (AT) of GlnE inhibits GlnA by covalent transfer of an adenylyl group from ATP to Tyr-397. Conversely, when nitrogen levels are low, the N-terminal adenylyl removase (AR) of GlnE activates GlnA by removing the adenylyl group by phosphorolysis. The fully adenylated enzyme complex is inactive. Its function is as follows. Catalyzes the formation of glutamine from glutamate and ammonia. In vitro, can also use hydroxylamine, methylamine and ethylamine, with 32%, 7% and 1% activity compared to ammonia, respectively. The protein is Glutamine synthetase of Pseudomonas taetrolens.